We begin with the raw amino-acid sequence, 225 residues long: Agamous-like MADS-box protein TM6 (225 aa).

The 61-residue stretch at 1–61 folds into the MADS-box domain; sequence MGRGKIEIKR…GKFHEYTSPT (61 aa). Positions 84-174 constitute a K-box domain; the sequence is YERMQENLRK…LLNFEAKCDD (91 aa).

In terms of tissue distribution, expressed during flower development in stamens, petals and carpels. Expressed in fruits and seeds.

The protein resides in the nucleus. In terms of biological role, probable transcription factor involved in flower development. The polypeptide is Agamous-like MADS-box protein TM6 (Vitis vinifera (Grape)).